The following is a 1413-amino-acid chain: ABC-type transporter vrcC (1413 aa).

In terms of domain architecture, ABC transporter 1 spans 108-365 (VWFEALALAR…FLDMGFACPE (258 aa)). N289 is a glycosylation site (N-linked (GlcNAc...) asparagine). Residues 476-496 (VTISSLIGNVITALVIASIFY) traverse the membrane as a helical segment. A glycan (N-linked (GlcNAc...) asparagine) is linked at N501. 2 consecutive transmembrane segments (helical) span residues 510-530 (ALLF…MLTL) and 564-584 (VLNA…VLLG). N675 is a glycosylation site (N-linked (GlcNAc...) asparagine). A helical transmembrane segment spans residues 683–703 (IGIILAFMVVLGAIYLVATDF). A disordered region spans residues 725-748 (SGKPDDFEGGSDRNASQEKSKSDR). N-linked (GlcNAc...) asparagine glycosylation is present at N738. A compositionally biased stretch (basic and acidic residues) spans 739–748 (ASQEKSKSDR). Positions 761 to 1003 (FQWQDVCFDI…ILIDYFVRNG (243 aa)) constitute an ABC transporter 2 domain. The next 6 helical transmembrane spans lie at 1105–1125 (IYIY…GFSL), 1142–1162 (IFLL…HFVT), 1191–1211 (LFWN…PIGM), 1230–1250 (LLIW…IAAL), 1266–1286 (LCLL…FWIF), and 1290–1310 (VSPF…DTTV). N1324 is a glycosylation site (N-linked (GlcNAc...) asparagine). The chain crosses the membrane as a helical span at residues 1378 to 1398 (FGLMWVFIFTNIVAACLLYWW).

Belongs to the ABC transporter superfamily. ABCG family. PDR (TC 3.A.1.205) subfamily.

It localises to the cell membrane. Its function is as follows. ABC-type transporter; part of the gene cluster that mediates the biosynthesis of the sesterterpene variecolin. VrcC is probably involved in the secretion of variecolin. In Aspergillus aculeatus (strain ATCC 16872 / CBS 172.66 / WB 5094), this protein is ABC-type transporter vrcC.